A 467-amino-acid chain; its full sequence is Argininosuccinate lyase (467 aa).

This sequence belongs to the lyase 1 family. Argininosuccinate lyase subfamily.

The protein localises to the cytoplasm. It catalyses the reaction 2-(N(omega)-L-arginino)succinate = fumarate + L-arginine. Its pathway is amino-acid biosynthesis; L-arginine biosynthesis; L-arginine from L-ornithine and carbamoyl phosphate: step 3/3. The protein is Argininosuccinate lyase of Anaeromyxobacter sp. (strain K).